Reading from the N-terminus, the 60-residue chain is Potassium channel toxin alpha-KTx 29.3 (60 aa).

The signal sequence occupies residues 1–28 (MKSVCGVLIILVVLTTMLSISTFSTVGA). Disulfide bonds link Cys32–Cys51, Cys40–Cys56, and Cys44–Cys58.

This sequence belongs to the short scorpion toxin superfamily. Potassium channel inhibitor family. Alpha-KTx 29 subfamily. In terms of tissue distribution, expressed by the venom gland.

The protein resides in the secreted. In terms of biological role, weakly inhibits the Kv1.3/KCNA3 channel (1 uM of thetoxin inhibits currents by 13.2%) and Kv7.1/KCNQ1 channel (10 uM of the toxin inhibits currents by 27.7%). The chain is Potassium channel toxin alpha-KTx 29.3 from Lychas mucronatus (Chinese swimming scorpion).